The sequence spans 434 residues: Lipoyl synthase, mitochondrial (434 aa).

The transit peptide at 1 to 31 (MAASARGLRTLQSAHSSTTVPRLQLAVSRCY) directs the protein to the mitochondrion. The segment covering 34-54 (TTSPDPPITNSSNSSNSTPTP) has biased composition (low complexity). Positions 34–55 (TTSPDPPITNSSNSSNSTPTPK) are disordered. Positions 144, 149, 155, 175, 179, 182, and 390 each coordinate [4Fe-4S] cluster. The 222-residue stretch at 158–379 (GSSKSAATAT…KERALEMGFL (222 aa)) folds into the Radical SAM core domain.

Belongs to the radical SAM superfamily. Lipoyl synthase family. [4Fe-4S] cluster is required as a cofactor.

Its subcellular location is the mitochondrion. It catalyses the reaction [[Fe-S] cluster scaffold protein carrying a second [4Fe-4S](2+) cluster] + N(6)-octanoyl-L-lysyl-[protein] + 2 oxidized [2Fe-2S]-[ferredoxin] + 2 S-adenosyl-L-methionine + 4 H(+) = [[Fe-S] cluster scaffold protein] + N(6)-[(R)-dihydrolipoyl]-L-lysyl-[protein] + 4 Fe(3+) + 2 hydrogen sulfide + 2 5'-deoxyadenosine + 2 L-methionine + 2 reduced [2Fe-2S]-[ferredoxin]. The protein operates within protein modification; protein lipoylation via endogenous pathway; protein N(6)-(lipoyl)lysine from octanoyl-[acyl-carrier-protein]: step 2/2. Functionally, catalyzes the radical-mediated insertion of two sulfur atoms into the C-6 and C-8 positions of the octanoyl moiety bound to the lipoyl domains of lipoate-dependent enzymes, thereby converting the octanoylated domains into lipoylated derivatives. The sequence is that of Lipoyl synthase, mitochondrial from Paracoccidioides brasiliensis (strain Pb03).